A 395-amino-acid polypeptide reads, in one-letter code: MTENIIESGDPQARYDSVIEKDSKYVMQTYGRQPLVLSKGKGAVVQDIYGKEYIDCVAGIAVNNVGHCHPTVVKAIQAQAENLIHVSNLYYTEIQAEFAETLASITGMERVFFCNSGAESVEAAMKLARVATGKSAFVAAEHSFHGRTIGALSVTHKSMYRDPFMPPVSSETTFVPYSDAEAIRQAISENTAAVILEPIQGEGGINIPDPGYLKEVREICDETGALLIFDEVQTGFGRTGTWFCKEQFGVEPDIMSMSKAIGGGFPMGAIAAHNGINFGRGQHASTFGGGPLACAAALASVKVIREEKLLERSKEMGAYFMKKLAGMVRDDVVEVRGKGLMIGVEIKYPCGKFVDFAREQGVLVNCTSDSVLRLVPPLVITKEQIDTVVDVLEQA.

Pyridoxal 5'-phosphate contacts are provided by residues 117 to 118 (GA) and Phe-144. Residue Arg-147 coordinates N(2)-acetyl-L-ornithine. 230 to 233 (DEVQ) serves as a coordination point for pyridoxal 5'-phosphate. Lys-259 is subject to N6-(pyridoxal phosphate)lysine. Ser-285 provides a ligand contact to N(2)-acetyl-L-ornithine. Thr-286 lines the pyridoxal 5'-phosphate pocket.

It belongs to the class-III pyridoxal-phosphate-dependent aminotransferase family. ArgD subfamily. In terms of assembly, homodimer. The cofactor is pyridoxal 5'-phosphate.

It localises to the cytoplasm. It carries out the reaction N(2)-acetyl-L-ornithine + 2-oxoglutarate = N-acetyl-L-glutamate 5-semialdehyde + L-glutamate. It participates in amino-acid biosynthesis; L-arginine biosynthesis; N(2)-acetyl-L-ornithine from L-glutamate: step 4/4. This is Acetylornithine aminotransferase from Methanosarcina acetivorans (strain ATCC 35395 / DSM 2834 / JCM 12185 / C2A).